Here is a 418-residue protein sequence, read N- to C-terminus: Queuine tRNA-ribosyltransferase accessory subunit 2 (418 aa).

Zn(2+) is bound by residues Cys-325, Cys-327, Cys-330, and His-356.

This sequence belongs to the queuine tRNA-ribosyltransferase family. QTRT2 subfamily. In terms of assembly, heterodimer of a catalytic subunit and an accessory subunit. Zn(2+) serves as cofactor.

It is found in the cytoplasm. Non-catalytic subunit of the queuine tRNA-ribosyltransferase (TGT) that catalyzes the base-exchange of a guanine (G) residue with queuine (Q) at position 34 (anticodon wobble position) in tRNAs with GU(N) anticodons (tRNA-Asp, -Asn, -His and -Tyr), resulting in the hypermodified nucleoside queuosine (7-(((4,5-cis-dihydroxy-2-cyclopenten-1-yl)amino)methyl)-7-deazaguanosine). The protein is Queuine tRNA-ribosyltransferase accessory subunit 2 of Drosophila melanogaster (Fruit fly).